We begin with the raw amino-acid sequence, 329 residues long: 4-hydroxy-3-methylbut-2-enyl diphosphate reductase 1 (329 aa).

Position 29 (cysteine 29) interacts with [4Fe-4S] cluster. (2E)-4-hydroxy-3-methylbut-2-enyl diphosphate-binding residues include histidine 58 and histidine 95. Histidine 58 and histidine 95 together coordinate dimethylallyl diphosphate. Positions 58 and 95 each coordinate isopentenyl diphosphate. Cysteine 117 serves as a coordination point for [4Fe-4S] cluster. Histidine 145 is a binding site for (2E)-4-hydroxy-3-methylbut-2-enyl diphosphate. Dimethylallyl diphosphate is bound at residue histidine 145. Residue histidine 145 participates in isopentenyl diphosphate binding. The active-site Proton donor is the glutamate 147. Threonine 185 contributes to the (2E)-4-hydroxy-3-methylbut-2-enyl diphosphate binding site. Residue cysteine 215 participates in [4Fe-4S] cluster binding. (2E)-4-hydroxy-3-methylbut-2-enyl diphosphate contacts are provided by serine 243, serine 244, asparagine 245, and serine 287. Serine 243, serine 244, asparagine 245, and serine 287 together coordinate dimethylallyl diphosphate. 4 residues coordinate isopentenyl diphosphate: serine 243, serine 244, asparagine 245, and serine 287.

Belongs to the IspH family. It depends on [4Fe-4S] cluster as a cofactor.

The catalysed reaction is isopentenyl diphosphate + 2 oxidized [2Fe-2S]-[ferredoxin] + H2O = (2E)-4-hydroxy-3-methylbut-2-enyl diphosphate + 2 reduced [2Fe-2S]-[ferredoxin] + 2 H(+). It carries out the reaction dimethylallyl diphosphate + 2 oxidized [2Fe-2S]-[ferredoxin] + H2O = (2E)-4-hydroxy-3-methylbut-2-enyl diphosphate + 2 reduced [2Fe-2S]-[ferredoxin] + 2 H(+). The protein operates within isoprenoid biosynthesis; dimethylallyl diphosphate biosynthesis; dimethylallyl diphosphate from (2E)-4-hydroxy-3-methylbutenyl diphosphate: step 1/1. Its pathway is isoprenoid biosynthesis; isopentenyl diphosphate biosynthesis via DXP pathway; isopentenyl diphosphate from 1-deoxy-D-xylulose 5-phosphate: step 6/6. Functionally, catalyzes the conversion of 1-hydroxy-2-methyl-2-(E)-butenyl 4-diphosphate (HMBPP) into a mixture of isopentenyl diphosphate (IPP) and dimethylallyl diphosphate (DMAPP). Acts in the terminal step of the DOXP/MEP pathway for isoprenoid precursor biosynthesis. This chain is 4-hydroxy-3-methylbut-2-enyl diphosphate reductase 1, found in Mycobacterium tuberculosis (strain CDC 1551 / Oshkosh).